Reading from the N-terminus, the 726-residue chain is Probable dipeptidyl-peptidase 5 (726 aa).

The first 19 residues, 1–19 (MGALQWLSITAAAASAVSA), serve as a signal peptide directing secretion. Residues asparagine 97, asparagine 153, asparagine 259, asparagine 398, asparagine 453, and asparagine 529 are each glycosylated (N-linked (GlcNAc...) asparagine). Catalysis depends on serine 564, which acts as the Charge relay system. Residue asparagine 611 is glycosylated (N-linked (GlcNAc...) asparagine). Active-site charge relay system residues include aspartate 647 and histidine 679.

Belongs to the peptidase S9C family.

Its subcellular location is the secreted. Extracellular dipeptidyl-peptidase which removes N-terminal dipeptides sequentially from polypeptides having unsubstituted N-termini. The chain is Probable dipeptidyl-peptidase 5 (dpp5) from Aspergillus niger.